Reading from the N-terminus, the 323-residue chain is Cytochrome c biogenesis protein CcsA (323 aa).

The next 8 membrane-spanning stretches (helical) occupy residues 9–29 (ILTHISFSIISIVITIHLLNL), 45–62 (MMATFFCITGLLVTRWIY), 71–91 (LYESLMFLSWSFSIIHMVPYF), 98–118 (LSAITAPSAIFTQGFATSGLL), 143–163 (MLLGYASLLCGSLLSVALLVI), 227–247 (IISLGFTFSTIGILSGAVWAN), 261–275 (TWAFITWTIFAIYLH), and 285–305 (VGPAIVASMGFLIIWICYFGV).

This sequence belongs to the CcmF/CycK/Ccl1/NrfE/CcsA family. In terms of assembly, may interact with Ccs1.

The protein resides in the plastid. It is found in the chloroplast thylakoid membrane. Functionally, required during biogenesis of c-type cytochromes (cytochrome c6 and cytochrome f) at the step of heme attachment. This Calycanthus floridus var. glaucus (Eastern sweetshrub) protein is Cytochrome c biogenesis protein CcsA.